The chain runs to 1039 residues: Kinesin-like protein KIN-5B (1039 aa).

The Kinesin motor domain maps to Asn-48–Ile-390. Gly-134–Thr-141 contacts ATP. Positions Thr-1008 to Lys-1039 are disordered. The segment covering Ser-1010–Ser-1020 has biased composition (basic and acidic residues).

It belongs to the TRAFAC class myosin-kinesin ATPase superfamily. Kinesin family. KIN-5/BimC subfamily.

The protein resides in the cytoplasm. It is found in the cytoskeleton. It localises to the spindle. Functionally, responsible for microtubule translocation. May be important for the organization of phragmoplast-specific arrays of microtubules. Plays an essential role in stabilizing the mitotic spindle. Required during mitotic cytokinesis. The sequence is that of Kinesin-like protein KIN-5B from Arabidopsis thaliana (Mouse-ear cress).